Consider the following 621-residue polypeptide: Auxin response factor 13 (621 aa).

A DNA-binding region (TF-B3) is located at residues 124–228; that stretch reads FSKILTASDV…ELRFGIRRAK (105 aa). One can recognise a PB1 domain in the interval 508 to 600; it reads RSRIKVHMQG…EIKKMKLKNK (93 aa).

The protein belongs to the ARF family. As to quaternary structure, homodimers and heterodimers.

It is found in the nucleus. Functionally, auxin response factors (ARFs) are transcriptional factors that bind specifically to the DNA sequence 5'-TGTCTC-3' found in the auxin-responsive promoter elements (AuxREs). Could act as transcriptional activator or repressor. Formation of heterodimers with Aux/IAA proteins may alter their ability to modulate early auxin response genes expression. In Arabidopsis thaliana (Mouse-ear cress), this protein is Auxin response factor 13 (ARF13).